The primary structure comprises 552 residues: Urocanate hydratase (552 aa).

NAD(+)-binding positions include 49-50 (GG), Gln127, 173-175 (GMG), Asp193, 239-240 (NA), 260-264 (QTSAH), 270-271 (YI), and Tyr319. Residue Cys407 is part of the active site. Residue Gly489 coordinates NAD(+).

It belongs to the urocanase family. The cofactor is NAD(+).

It is found in the cytoplasm. It carries out the reaction 4-imidazolone-5-propanoate = trans-urocanate + H2O. It participates in amino-acid degradation; L-histidine degradation into L-glutamate; N-formimidoyl-L-glutamate from L-histidine: step 2/3. Functionally, catalyzes the conversion of urocanate to 4-imidazolone-5-propionate. In Bacillus cereus (strain AH187), this protein is Urocanate hydratase.